Here is a 187-residue protein sequence, read N- to C-terminus: UPF0301 protein BCI_0481 (187 aa).

Belongs to the UPF0301 (AlgH) family.

The chain is UPF0301 protein BCI_0481 from Baumannia cicadellinicola subsp. Homalodisca coagulata.